A 241-amino-acid polypeptide reads, in one-letter code: Probable transcriptional regulatory protein str0195 (241 aa).

It belongs to the TACO1 family. YeeN subfamily.

The protein localises to the cytoplasm. The sequence is that of Probable transcriptional regulatory protein str0195 from Streptococcus thermophilus (strain CNRZ 1066).